A 351-amino-acid chain; its full sequence is Histidine protein kinase SaeS (351 aa).

2 helical membrane passes run 9-29 and 40-60; these read IIIG…IAYI and TLTL…SIFI. The 54-residue stretch at 61 to 114 folds into the HAMP domain; it reads NPLIQKIKQFNIKTKQFANGNYASNDKTFNSPKEIYELNQSFNKMASEITQQMN. One can recognise a Histidine kinase domain in the interval 129–348; the sequence is NLAHDLKTPL…TMTVTLHKLD (220 aa). Histidine 132 carries the post-translational modification Phosphohistidine; by autocatalysis.

In terms of processing, autophosphorylated.

It is found in the cell membrane. The enzyme catalyses ATP + protein L-histidine = ADP + protein N-phospho-L-histidine.. In terms of biological role, member of the two-component regulatory system SaeR/SaeS involved in the regulation of staphylococcal virulence factors in a strain-dependent fashion. Probably functions as a membrane-associated protein kinase that upon sensing the appropriate signal, autophosphorylates and in turn activates the cytosolic response regulator SaeR. SaeR/SaeS activates the expression of exoproteins involved in adhesion and invasion of host cells, including hemolysins (hla, hlb, hlgC), coa, DNase, spa and cell wall-associated proteins (emp, eap, fnbA, fnbB, efb). Represses the expression of type 5 capsular polysaccharide (cap operon). Also modulates the expression of several other genes. The chain is Histidine protein kinase SaeS (saeS) from Staphylococcus aureus (strain Newman).